The following is a 712-amino-acid chain: Polyribonucleotide nucleotidyltransferase (712 aa).

The Mg(2+) site is built by Asp488 and Asp494. The KH domain maps to 555–614; that stretch reads PKIETINIPTDKIREVIGSGGKVIREIVATTGAKVDINDDGVVKVSASDGAKIKAAIDWI. The S1 motif domain maps to 624 to 692; the sequence is GKIYDGKVVK…DRGKTKLSMK (69 aa).

Belongs to the polyribonucleotide nucleotidyltransferase family. Requires Mg(2+) as cofactor.

The protein resides in the cytoplasm. The catalysed reaction is RNA(n+1) + phosphate = RNA(n) + a ribonucleoside 5'-diphosphate. In terms of biological role, involved in mRNA degradation. Catalyzes the phosphorolysis of single-stranded polyribonucleotides processively in the 3'- to 5'-direction. The protein is Polyribonucleotide nucleotidyltransferase of Caulobacter vibrioides (strain NA1000 / CB15N) (Caulobacter crescentus).